The following is a 159-amino-acid chain: FCS-Like Zinc finger 2 (159 aa).

The FLZ-type zinc finger occupies His-75–Glu-119. Basic and acidic residues predominate over residues Glu-113 to Gln-122. The tract at residues Glu-113–Ala-159 is disordered.

This sequence belongs to the FLZ family. Interacts with KIN10 and KIN11 via its FLZ-type zinc finger domain. Interacts with KINB1, KINB2, KINB3 and SNF4 via its N-terminal part. Forms heterodimer with FLZ7, FLZ10, FLZ11, FLZ12, FLZ15, FLZ17 and FLZ18 in vitro.

May act as an adapter to facilitate the interaction of SnRK1 complex with effector proteins, conferring tissue- and stimulus-type specific differences in the SnRK1 regulation pathway. In Arabidopsis thaliana (Mouse-ear cress), this protein is FCS-Like Zinc finger 2.